A 512-amino-acid polypeptide reads, in one-letter code: UDP-N-acetylmuramoyl-L-alanyl-D-glutamate--2,6-diaminopimelate ligase (512 aa).

A UDP-N-acetyl-alpha-D-muramoyl-L-alanyl-D-glutamate-binding site is contributed by Ser32. 114 to 120 contributes to the ATP binding site; the sequence is GTNGKTT. Residues 156-157, Ser183, and Arg191 each bind UDP-N-acetyl-alpha-D-muramoyl-L-alanyl-D-glutamate; that span reads TT. Lys223 bears the N6-carboxylysine mark. Meso-2,6-diaminopimelate-binding positions include Arg395, 419 to 422, Gly469, and Glu473; that span reads DNPR. Residues 419–422 carry the Meso-diaminopimelate recognition motif motif; the sequence is DNPR.

Belongs to the MurCDEF family. MurE subfamily. Mg(2+) is required as a cofactor. In terms of processing, carboxylation is probably crucial for Mg(2+) binding and, consequently, for the gamma-phosphate positioning of ATP.

The protein localises to the cytoplasm. It catalyses the reaction UDP-N-acetyl-alpha-D-muramoyl-L-alanyl-D-glutamate + meso-2,6-diaminopimelate + ATP = UDP-N-acetyl-alpha-D-muramoyl-L-alanyl-gamma-D-glutamyl-meso-2,6-diaminopimelate + ADP + phosphate + H(+). It functions in the pathway cell wall biogenesis; peptidoglycan biosynthesis. Catalyzes the addition of meso-diaminopimelic acid to the nucleotide precursor UDP-N-acetylmuramoyl-L-alanyl-D-glutamate (UMAG) in the biosynthesis of bacterial cell-wall peptidoglycan. The polypeptide is UDP-N-acetylmuramoyl-L-alanyl-D-glutamate--2,6-diaminopimelate ligase (Chlorobium phaeobacteroides (strain DSM 266 / SMG 266 / 2430)).